The sequence spans 164 residues: UPF0304 protein CKO_00501 (164 aa).

This sequence belongs to the UPF0304 family.

This is UPF0304 protein CKO_00501 from Citrobacter koseri (strain ATCC BAA-895 / CDC 4225-83 / SGSC4696).